Reading from the N-terminus, the 144-residue chain is Large ribosomal subunit protein uL15 (144 aa).

Residues 1 to 57 form a disordered region; the sequence is MQLNDLRSAPGARREKHRPGRGIGSGLGKTGGRGHKGLTSRSGGKVAPGFEGGQQPL. Residues 21–31 show a composition bias toward gly residues; it reads RGIGSGLGKTG.

This sequence belongs to the universal ribosomal protein uL15 family. Part of the 50S ribosomal subunit.

In terms of biological role, binds to the 23S rRNA. This is Large ribosomal subunit protein uL15 from Pseudomonas aeruginosa (strain LESB58).